Reading from the N-terminus, the 629-residue chain is Probable potassium transport system protein Kup 3 (629 aa).

The next 12 membrane-spanning stretches (helical) occupy residues 20–40, 61–81, 106–126, 143–163, 171–191, 212–232, 253–273, 291–311, 343–363, 372–392, 400–420, and 425–445; these read LSLS…LYTF, VSLI…SFAL, PFII…GTIT, PSLK…LFAI, IGKA…ILGA, FLFS…LCVT, WFGL…ALVL, FLLP…QAII, IYIG…TIGF, AYGI…FIAL, IITS…FFAA, and FING…MMYI.

Belongs to the HAK/KUP transporter (TC 2.A.72) family.

Its subcellular location is the cell inner membrane. It carries out the reaction K(+)(in) + H(+)(in) = K(+)(out) + H(+)(out). Transport of potassium into the cell. Likely operates as a K(+):H(+) symporter. The polypeptide is Probable potassium transport system protein Kup 3 (Legionella pneumophila (strain Lens)).